The primary structure comprises 393 residues: NAD(P)H-quinone oxidoreductase subunit H, chloroplastic (393 aa).

This sequence belongs to the complex I 49 kDa subunit family. As to quaternary structure, NDH is composed of at least 16 different subunits, 5 of which are encoded in the nucleus.

Its subcellular location is the plastid. It is found in the chloroplast thylakoid membrane. It catalyses the reaction a plastoquinone + NADH + (n+1) H(+)(in) = a plastoquinol + NAD(+) + n H(+)(out). It carries out the reaction a plastoquinone + NADPH + (n+1) H(+)(in) = a plastoquinol + NADP(+) + n H(+)(out). Functionally, NDH shuttles electrons from NAD(P)H:plastoquinone, via FMN and iron-sulfur (Fe-S) centers, to quinones in the photosynthetic chain and possibly in a chloroplast respiratory chain. The immediate electron acceptor for the enzyme in this species is believed to be plastoquinone. Couples the redox reaction to proton translocation, and thus conserves the redox energy in a proton gradient. In Cucumis sativus (Cucumber), this protein is NAD(P)H-quinone oxidoreductase subunit H, chloroplastic.